Reading from the N-terminus, the 357-residue chain is Uroporphyrinogen decarboxylase (357 aa).

Substrate contacts are provided by residues 27-31 (RQAGR), Asp-77, Tyr-154, Thr-209, and His-327.

The protein belongs to the uroporphyrinogen decarboxylase family. As to quaternary structure, homodimer.

The protein localises to the cytoplasm. It catalyses the reaction uroporphyrinogen III + 4 H(+) = coproporphyrinogen III + 4 CO2. It functions in the pathway porphyrin-containing compound metabolism; protoporphyrin-IX biosynthesis; coproporphyrinogen-III from 5-aminolevulinate: step 4/4. Catalyzes the decarboxylation of four acetate groups of uroporphyrinogen-III to yield coproporphyrinogen-III. The sequence is that of Uroporphyrinogen decarboxylase from Nitrosococcus oceani (strain ATCC 19707 / BCRC 17464 / JCM 30415 / NCIMB 11848 / C-107).